The sequence spans 352 residues: Respiratory nitrate reductase subunit beta (352 aa).

The 29-residue stretch at V20–G48 folds into the 4Fe-4S ferredoxin-type 1 domain. Positions 29, 32, 35, and 39 each coordinate [4Fe-4S] cluster. Disordered stretches follow at residues K63 to Y95 and S111 to Q131. Positions S78–Y95 are enriched in basic and acidic residues. 4Fe-4S ferredoxin-type domains follow at residues S139 to E170 and G172 to T201. Positions 148, 151, and 156 each coordinate [4Fe-4S] cluster. [3Fe-4S] cluster is bound by residues C160, C181, and C187. The [4Fe-4S] cluster site is built by C191, C208, C211, C229, and C233.

As to quaternary structure, probable multiprotein complex; a catalytic heterodimer of an alpha and beta chain is proposed to associate with additional subunits involved in membrane attachment and electron transfer. The cofactor is [4Fe-4S] cluster. [3Fe-4S] cluster is required as a cofactor.

The protein localises to the cell membrane. It carries out the reaction nitrate + a quinol = a quinone + nitrite + H2O. Its activity is regulated as follows. Inhibited by cyanide, azide and antimycin A. Enzyme stability is not dependent on salt concentration. Its function is as follows. The respiratory membrane-bound nitrate reductase enzyme complex plays a role in generation of metabolic energy by using nitrate as a terminal electron acceptor during anaerobic conditions. The beta chain is an electron transfer unit containing four cysteine clusters involved in the formation of iron-sulfur centers. This chain is Respiratory nitrate reductase subunit beta (narH), found in Haloferax mediterranei (strain ATCC 33500 / DSM 1411 / JCM 8866 / NBRC 14739 / NCIMB 2177 / R-4) (Halobacterium mediterranei).